Here is a 165-residue protein sequence, read N- to C-terminus: Chorismate pyruvate-lyase (165 aa).

4 residues coordinate substrate: Met35, Arg77, Leu115, and Glu156.

This sequence belongs to the UbiC family. In terms of assembly, monomer.

The protein localises to the cytoplasm. The catalysed reaction is chorismate = 4-hydroxybenzoate + pyruvate. It functions in the pathway cofactor biosynthesis; ubiquinone biosynthesis. In terms of biological role, removes the pyruvyl group from chorismate, with concomitant aromatization of the ring, to provide 4-hydroxybenzoate (4HB) for the ubiquinone pathway. The polypeptide is Chorismate pyruvate-lyase (Shigella boydii serotype 18 (strain CDC 3083-94 / BS512)).